Reading from the N-terminus, the 171-residue chain is Large ribosomal subunit protein uL10 (171 aa).

This sequence belongs to the universal ribosomal protein uL10 family. Part of the ribosomal stalk of the 50S ribosomal subunit. The N-terminus interacts with L11 and the large rRNA to form the base of the stalk. The C-terminus forms an elongated spine to which L12 dimers bind in a sequential fashion forming a multimeric L10(L12)X complex.

Forms part of the ribosomal stalk, playing a central role in the interaction of the ribosome with GTP-bound translation factors. The chain is Large ribosomal subunit protein uL10 from Corynebacterium jeikeium (strain K411).